A 166-amino-acid chain; its full sequence is UPF0254 protein Maeo_0668 (166 aa).

It belongs to the UPF0254 family.

The protein is UPF0254 protein Maeo_0668 of Methanococcus aeolicus (strain ATCC BAA-1280 / DSM 17508 / OCM 812 / Nankai-3).